Reading from the N-terminus, the 156-residue chain is ATP synthase subunit b (156 aa).

A helical transmembrane segment spans residues 11–31 (AIAFVLFVLFCMKYVWPPIMA).

This sequence belongs to the ATPase B chain family. In terms of assembly, F-type ATPases have 2 components, F(1) - the catalytic core - and F(0) - the membrane proton channel. F(1) has five subunits: alpha(3), beta(3), gamma(1), delta(1), epsilon(1). F(0) has three main subunits: a(1), b(2) and c(10-14). The alpha and beta chains form an alternating ring which encloses part of the gamma chain. F(1) is attached to F(0) by a central stalk formed by the gamma and epsilon chains, while a peripheral stalk is formed by the delta and b chains.

It is found in the cell inner membrane. Its function is as follows. F(1)F(0) ATP synthase produces ATP from ADP in the presence of a proton or sodium gradient. F-type ATPases consist of two structural domains, F(1) containing the extramembraneous catalytic core and F(0) containing the membrane proton channel, linked together by a central stalk and a peripheral stalk. During catalysis, ATP synthesis in the catalytic domain of F(1) is coupled via a rotary mechanism of the central stalk subunits to proton translocation. Functionally, component of the F(0) channel, it forms part of the peripheral stalk, linking F(1) to F(0). This is ATP synthase subunit b from Cronobacter sakazakii (strain ATCC BAA-894) (Enterobacter sakazakii).